Here is a 217-residue protein sequence, read N- to C-terminus: Peroxiredoxin Q, chloroplastic (217 aa).

A chloroplast-targeting transit peptide spans 1-66 (MAFAASTACC…RRRAASTGIV (66 aa)). In terms of domain architecture, Thioredoxin spans 70–217 (VSKGSVPPNF…GETLKIIQNL (148 aa)). Cys-112 functions as the Cysteine sulfenic acid (-SOH) intermediate in the catalytic mechanism. A disulfide bridge links Cys-112 with Cys-117.

The protein belongs to the peroxiredoxin family. BCP/PrxQ subfamily. Monomer.

The protein resides in the plastid. The protein localises to the chloroplast thylakoid lumen. It catalyses the reaction a hydroperoxide + [thioredoxin]-dithiol = an alcohol + [thioredoxin]-disulfide + H2O. Its function is as follows. Thiol-specific peroxidase that catalyzes the reduction of hydrogen peroxide and organic hydroperoxides to water and alcohols, respectively. Plays a role in cell protection against oxidative stress by detoxifying peroxides. The sequence is that of Peroxiredoxin Q, chloroplastic (PRX1) from Triticum aestivum (Wheat).